Here is a 239-residue protein sequence, read N- to C-terminus: Phosducin-like protein 3 (239 aa).

Position 1 is an N-acetylmethionine (Met-1). Residues 32-180 form the Phosducin domain; that stretch reads EAEEEQRILQ…EGDIKAQFIG (149 aa). A phosphoserine mark is found at Ser-43, Ser-234, and Ser-236. Residues 91-239 are thioredoxin fold; the sequence is FGEVLEISGK…MKRDSDSEGD (149 aa).

This sequence belongs to the phosducin family. As to quaternary structure, interacts (via thioredoxin fold region) with KDR/VEGFR2 (via juxtamembrane domain). Forms ternary complexes with the chaperonin CCT complex and actin substrate, leading to inhibition of actin folding. Interacts with XIAP (via BIR 3 and RING domain). Interacts with HSP90AA1 and HSP90AB1. Post-translationally, N-terminal methionine acetylation destabilizes the protein.

Its subcellular location is the cytoplasm. The protein localises to the perinuclear region. It localises to the endoplasmic reticulum. Its function is as follows. Acts as a chaperone for the angiogenic VEGF receptor KDR/VEGFR2, increasing its abundance by inhibiting its ubiquitination and degradation. Inhibits the folding activity of the chaperonin-containing T-complex (CCT) which leads to inhibition of cytoskeletal actin folding. Acts as a chaperone during heat shock alongside HSP90 and HSP40/70 chaperone complexes. Modulates the activation of caspases during apoptosis. The chain is Phosducin-like protein 3 (PDCL3) from Pongo abelii (Sumatran orangutan).